The sequence spans 380 residues: 1-deoxy-D-xylulose 5-phosphate reductoisomerase (380 aa).

8 residues coordinate NADPH: S10, G11, S12, I13, G36, K37, N38, and N120. K121 contacts 1-deoxy-D-xylulose 5-phosphate. NADPH is bound at residue E122. D146 is a binding site for Mn(2+). 4 residues coordinate 1-deoxy-D-xylulose 5-phosphate: S147, E148, S172, and H195. E148 is a Mn(2+) binding site. G201 contacts NADPH. Positions 208, 213, 214, and 217 each coordinate 1-deoxy-D-xylulose 5-phosphate. Residue E217 participates in Mn(2+) binding.

Belongs to the DXR family. Mg(2+) is required as a cofactor. Requires Mn(2+) as cofactor.

It carries out the reaction 2-C-methyl-D-erythritol 4-phosphate + NADP(+) = 1-deoxy-D-xylulose 5-phosphate + NADPH + H(+). Its pathway is isoprenoid biosynthesis; isopentenyl diphosphate biosynthesis via DXP pathway; isopentenyl diphosphate from 1-deoxy-D-xylulose 5-phosphate: step 1/6. In terms of biological role, catalyzes the NADPH-dependent rearrangement and reduction of 1-deoxy-D-xylulose-5-phosphate (DXP) to 2-C-methyl-D-erythritol 4-phosphate (MEP). This is 1-deoxy-D-xylulose 5-phosphate reductoisomerase from Bacillus cereus (strain Q1).